The primary structure comprises 227 residues: Lectin (227 aa).

Positions 1 to 28 (MTMTSTTTKAMAMAAAVLAAAAVAATNA) are cleaved as a signal peptide. Gln-29 is subject to Pyrrolidone carboxylic acid. Chitin-binding type-1 domains are found at residues 29–70 (QTCG…ACCS), 71–113 (SQRC…PCRA), 114–156 (DIKC…ACCP), and 157–199 (EKRC…GCYK). 16 cysteine pairs are disulfide-bonded: Cys-31–Cys-46, Cys-40–Cys-52, Cys-45–Cys-59, Cys-63–Cys-68, Cys-74–Cys-89, Cys-83–Cys-95, Cys-88–Cys-102, Cys-106–Cys-111, Cys-117–Cys-132, Cys-126–Cys-138, Cys-131–Cys-145, Cys-149–Cys-154, Cys-160–Cys-175, Cys-169–Cys-181, Cys-174–Cys-188, and Cys-192–Cys-197. Substrate is bound at residue 38–40 (MIC). 90–101 (SQYGYCGFGSEY) is a binding site for substrate. 142–143 (SE) is a binding site for substrate. Residues 202 to 227 (DGMAAILANNQSVSFEGIIESVAELV) constitute a propeptide that is removed on maturation. N-linked (GlcNAc...) asparagine glycosylation occurs at Asn-211.

Its function is as follows. N-acetyl-D-glucosamine binding lectin. This is Lectin from Oryza sativa subsp. indica (Rice).